The chain runs to 219 residues: Ribosomal RNA large subunit methyltransferase E (219 aa).

Positions 60, 62, 80, 96, and 120 each coordinate S-adenosyl-L-methionine. Lysine 160 functions as the Proton acceptor in the catalytic mechanism.

Belongs to the class I-like SAM-binding methyltransferase superfamily. RNA methyltransferase RlmE family.

Its subcellular location is the cytoplasm. The catalysed reaction is uridine(2552) in 23S rRNA + S-adenosyl-L-methionine = 2'-O-methyluridine(2552) in 23S rRNA + S-adenosyl-L-homocysteine + H(+). Functionally, specifically methylates the uridine in position 2552 of 23S rRNA at the 2'-O position of the ribose in the fully assembled 50S ribosomal subunit. This is Ribosomal RNA large subunit methyltransferase E from Acidithiobacillus ferrooxidans (strain ATCC 23270 / DSM 14882 / CIP 104768 / NCIMB 8455) (Ferrobacillus ferrooxidans (strain ATCC 23270)).